The primary structure comprises 290 residues: Enoyl-CoA hydratase, mitochondrial (290 aa).

The transit peptide at 1–29 (MAALRALLPRACNSLLSPVRCPEFRRFAS) directs the protein to the mitochondrion. 98-101 (ADIK) serves as a coordination point for substrate. K101 and K115 each carry N6-acetyllysine; alternate. Residues K101 and K115 each carry the N6-succinyllysine; alternate modification. G141 serves as a coordination point for substrate. K204 carries the post-translational modification N6-succinyllysine. K211 carries the N6-acetyllysine modification.

The protein belongs to the enoyl-CoA hydratase/isomerase family. In terms of assembly, homohexamer; dimer of trimers. In terms of tissue distribution, detected in liver (at protein level).

It localises to the mitochondrion matrix. The enzyme catalyses a (3S)-3-hydroxyacyl-CoA = a (2E)-enoyl-CoA + H2O. The catalysed reaction is a (3E)-enoyl-CoA = a 4-saturated (2E)-enoyl-CoA. It carries out the reaction (3E)-hexenoyl-CoA = (2E)-hexenoyl-CoA. It catalyses the reaction (3S)-3-hydroxybutanoyl-CoA = (2E)-butenoyl-CoA + H2O. The enzyme catalyses 3-hydroxyisovaleryl-CoA = 3-methylbut-2-enoyl-CoA + H2O. The catalysed reaction is 3-hydroxypropanoyl-CoA = acryloyl-CoA + H2O. It carries out the reaction 3-hydroxybutanoyl-CoA = (2E)-butenoyl-CoA + H2O. It catalyses the reaction 2-methylpropenoyl-CoA + H2O = (S)-3-hydroxyisobutanoyl-CoA. The enzyme catalyses (3S)-hydroxyhexanoyl-CoA = (2E)-hexenoyl-CoA + H2O. The catalysed reaction is (3S)-hydroxydecanoyl-CoA = (2E)-decenoyl-CoA + H2O. It functions in the pathway lipid metabolism; fatty acid beta-oxidation. Converts unsaturated trans-2-enoyl-CoA species ((2E)-enoyl-CoA) to the corresponding 3(S)-3-hydroxyacyl-CoA species through addition of a water molecule to the double bond. Catalyzes the hydration of medium- and short-chained fatty enoyl-CoA thioesters from 4 carbons long (C4) up to C16. Has high substrate specificity for crotonyl-CoA ((2E)-butenoyl-CoA) and moderate specificity for acryloyl-CoA, 3-methylcrotonyl-CoA (3-methyl-(2E)-butenoyl-CoA) and methacrylyl-CoA ((2E)-2-methylpropenoyl-CoA). Can bind tiglyl-CoA (2-methylcrotonoyl-CoA), but hydrates only a small amount of this substrate. Plays a key role in the beta-oxidation spiral of short- and medium-chain fatty acid oxidation. At a lower rate than the hydratase reaction, catalyzes the isomerase reaction of trans-3-enoyl-CoA species (such as (3E)-hexenoyl-CoA) to trans-2-enoyl-CoA species (such as (2E)-hexenoyl-CoA), which are subsequently hydrated to 3(S)-3-hydroxyacyl-CoA species (such as (3S)-hydroxyhexanoyl-CoA). The polypeptide is Enoyl-CoA hydratase, mitochondrial (Rattus norvegicus (Rat)).